Here is a 142-residue protein sequence, read N- to C-terminus: Large ribosomal subunit protein uL11 (142 aa).

It belongs to the universal ribosomal protein uL11 family. As to quaternary structure, part of the ribosomal stalk of the 50S ribosomal subunit. Interacts with L10 and the large rRNA to form the base of the stalk. L10 forms an elongated spine to which L12 dimers bind in a sequential fashion forming a multimeric L10(L12)X complex. Post-translationally, one or more lysine residues are methylated.

Functionally, forms part of the ribosomal stalk which helps the ribosome interact with GTP-bound translation factors. This Mycobacterium leprae (strain Br4923) protein is Large ribosomal subunit protein uL11.